Reading from the N-terminus, the 179-residue chain is 3-hydroxyanthranilate 3,4-dioxygenase (179 aa).

Arg-47 contacts O2. Fe cation-binding residues include His-51, Glu-57, and His-96. Glu-57 contacts substrate. Residues Arg-100 and Glu-110 each contribute to the substrate site. Positions 125, 128, 162, and 165 each coordinate Fe cation.

This sequence belongs to the 3-HAO family. It depends on Fe(2+) as a cofactor.

It catalyses the reaction 3-hydroxyanthranilate + O2 = (2Z,4Z)-2-amino-3-carboxymuconate 6-semialdehyde. It functions in the pathway cofactor biosynthesis; NAD(+) biosynthesis; quinolinate from L-kynurenine: step 3/3. Its function is as follows. Catalyzes the oxidative ring opening of 3-hydroxyanthranilate to 2-amino-3-carboxymuconate semialdehyde, which spontaneously cyclizes to quinolinate. The chain is 3-hydroxyanthranilate 3,4-dioxygenase from Bacillus thuringiensis (strain Al Hakam).